Here is a 104-residue protein sequence, read N- to C-terminus: MAAKIRRDDEVIVLTGKDKGKRGKVKNVLSSGKVIIEGINLVKKHQKPVPALNQPGGIVEKEAAIQVSNVAIFNAATGKADRVGFRFEDGKKVRFFKSNSETIK.

Belongs to the universal ribosomal protein uL24 family. As to quaternary structure, part of the 50S ribosomal subunit.

Functionally, one of two assembly initiator proteins, it binds directly to the 5'-end of the 23S rRNA, where it nucleates assembly of the 50S subunit. Its function is as follows. One of the proteins that surrounds the polypeptide exit tunnel on the outside of the subunit. This Shigella flexneri protein is Large ribosomal subunit protein uL24.